The following is a 347-amino-acid chain: Uroporphyrinogen decarboxylase (347 aa).

Substrate-binding positions include 24-28 (RQAGR), Phe42, Asp73, Tyr150, Thr205, and His320.

Belongs to the uroporphyrinogen decarboxylase family. Homodimer.

It localises to the cytoplasm. It carries out the reaction uroporphyrinogen III + 4 H(+) = coproporphyrinogen III + 4 CO2. It functions in the pathway porphyrin-containing compound metabolism; protoporphyrin-IX biosynthesis; coproporphyrinogen-III from 5-aminolevulinate: step 4/4. Functionally, catalyzes the decarboxylation of four acetate groups of uroporphyrinogen-III to yield coproporphyrinogen-III. This Gloeobacter violaceus (strain ATCC 29082 / PCC 7421) protein is Uroporphyrinogen decarboxylase.